A 256-amino-acid chain; its full sequence is Thiazole synthase (256 aa).

Lys-96 (schiff-base intermediate with DXP) is an active-site residue. Residues Gly-157, 184-185 (AG), and 206-207 (NT) each bind 1-deoxy-D-xylulose 5-phosphate.

The protein belongs to the ThiG family. In terms of assembly, homotetramer. Forms heterodimers with either ThiH or ThiS.

It is found in the cytoplasm. The catalysed reaction is [ThiS sulfur-carrier protein]-C-terminal-Gly-aminoethanethioate + 2-iminoacetate + 1-deoxy-D-xylulose 5-phosphate = [ThiS sulfur-carrier protein]-C-terminal Gly-Gly + 2-[(2R,5Z)-2-carboxy-4-methylthiazol-5(2H)-ylidene]ethyl phosphate + 2 H2O + H(+). It functions in the pathway cofactor biosynthesis; thiamine diphosphate biosynthesis. Its function is as follows. Catalyzes the rearrangement of 1-deoxy-D-xylulose 5-phosphate (DXP) to produce the thiazole phosphate moiety of thiamine. Sulfur is provided by the thiocarboxylate moiety of the carrier protein ThiS. In vitro, sulfur can be provided by H(2)S. The chain is Thiazole synthase from Brucella melitensis biotype 2 (strain ATCC 23457).